A 385-amino-acid polypeptide reads, in one-letter code: UDP-N-acetylglucosamine--N-acetylmuramyl-(pentapeptide) pyrophosphoryl-undecaprenol N-acetylglucosamine transferase (385 aa).

UDP-N-acetyl-alpha-D-glucosamine contacts are provided by residues 11 to 13 (TGG), Asn117, Arg160, Ser215, and Gln317.

It belongs to the glycosyltransferase 28 family. MurG subfamily.

The protein localises to the cell inner membrane. The enzyme catalyses di-trans,octa-cis-undecaprenyl diphospho-N-acetyl-alpha-D-muramoyl-L-alanyl-D-glutamyl-meso-2,6-diaminopimeloyl-D-alanyl-D-alanine + UDP-N-acetyl-alpha-D-glucosamine = di-trans,octa-cis-undecaprenyl diphospho-[N-acetyl-alpha-D-glucosaminyl-(1-&gt;4)]-N-acetyl-alpha-D-muramoyl-L-alanyl-D-glutamyl-meso-2,6-diaminopimeloyl-D-alanyl-D-alanine + UDP + H(+). It participates in cell wall biogenesis; peptidoglycan biosynthesis. In terms of biological role, cell wall formation. Catalyzes the transfer of a GlcNAc subunit on undecaprenyl-pyrophosphoryl-MurNAc-pentapeptide (lipid intermediate I) to form undecaprenyl-pyrophosphoryl-MurNAc-(pentapeptide)GlcNAc (lipid intermediate II). This is UDP-N-acetylglucosamine--N-acetylmuramyl-(pentapeptide) pyrophosphoryl-undecaprenol N-acetylglucosamine transferase from Rickettsia prowazekii (strain Madrid E).